The following is a 350-amino-acid chain: Putative deoxyribonuclease-2 (350 aa).

This sequence belongs to the DNase II family.

The chain is Putative deoxyribonuclease-2 from Burkholderia pseudomallei (strain 1710b).